Here is a 459-residue protein sequence, read N- to C-terminus: Elongation factor 1-alpha (459 aa).

Gly2 carries the post-translational modification N,N,N-trimethylglycine. N6,N6-dimethyllysine; alternate is present on Lys3. N6-methyllysine; alternate is present on Lys3. The 236-residue stretch at 5 to 240 folds into the tr-type G domain; it reads KLHVNVVVIG…DAIEPPTRPT (236 aa). A G1 region spans residues 14–21; sequence GHVDSGKS. 14 to 21 lines the GTP pocket; sequence GHVDSGKS. Residue Lys30 is modified to N6-methyllysine. Positions 70 to 74 are G2; the sequence is GITID. Lys79 carries the post-translational modification N6,N6,N6-trimethyllysine. Positions 91-94 are G3; that stretch reads DAPG. GTP-binding positions include 91–95 and 153–156; these read DAPGH and NKMD. A G4 region spans residues 153–156; that stretch reads NKMD. The G5 stretch occupies residues 192 to 194; that stretch reads SGW. N6,N6-dimethyllysine; alternate is present on Lys316. An N6-methyllysine; alternate modification is found at Lys316. The residue at position 390 (Lys390) is an N6-methyllysine.

This sequence belongs to the TRAFAC class translation factor GTPase superfamily. Classic translation factor GTPase family. EF-Tu/EF-1A subfamily.

It is found in the cytoplasm. Its function is as follows. This protein promotes the GTP-dependent binding of aminoacyl-tRNA to the A-site of ribosomes during protein biosynthesis. The chain is Elongation factor 1-alpha (TEF1) from Cryptococcus neoformans var. neoformans serotype D (strain B-3501A) (Filobasidiella neoformans).